Reading from the N-terminus, the 648-residue chain is Serine/threonine-protein kinase PrkC (648 aa).

Topologically, residues 1 to 330 are cytoplasmic; sequence MLIGKRISGR…KKNGKRKKWP (330 aa). The 261-residue stretch at 11–271 folds into the Protein kinase domain; sequence YQILRVIGGG…DMEADIKTAF (261 aa). ATP contacts are provided by residues 17-25 and Lys-40; that span reads IGGGGMANV. The active-site Proton acceptor is the Asp-134. Thr-162, Thr-163, Thr-165, and Thr-167 each carry phosphothreonine; by autocatalysis. A Phosphoserine; by autocatalysis modification is found at Ser-214. Residues Thr-290, Thr-313, and Thr-320 each carry the phosphothreonine; by autocatalysis modification. Residues 331–351 traverse the membrane as a helical segment; sequence WVLLTICLVFITAGILAVTVF. At 352–648 the chain is on the extracellular side; the sequence is PSLFMPKDVK…YKTIEYPKDE (297 aa). PASTA domains follow at residues 356 to 424, 425 to 492, and 493 to 559; these read MPKD…YKST, GKAK…TVSI, and GPED…TFSL.

The protein belongs to the protein kinase superfamily. Ser/Thr protein kinase family. Homodimer. Post-translationally, autophosphorylation on threonine residue(s) and serine residue considerably increases the kinase activity of the protein. Dephosphorylated in vitro by PrpC.

The protein resides in the spore membrane. The enzyme catalyses L-seryl-[protein] + ATP = O-phospho-L-seryl-[protein] + ADP + H(+). It catalyses the reaction L-threonyl-[protein] + ATP = O-phospho-L-threonyl-[protein] + ADP + H(+). With respect to regulation, bryostatin activates PrkC activity and induces germination, whereas staurosporine inhibits PrkC and significantly reduced peptidoglycan-dependent germination. Kinase activity of isolated N-terminus stimulated by poly-L-lysine or myelin basic protein. Protein kinase that is responsible for triggering spore germination in response to muropeptides, signaling bacteria to exit dormancy. PrkC is thus a germination receptor that binds peptidoglycan fragments containing m-Dpm (meso-diaminopimelate), which act as spore germinants. Autophosphorylates and phosphorylates EF-G (elongation factor G, fusA); the latter modification is likely necessary for germination in response to peptidoglycan. Another group did not detect phosphorylation of EF-G. PrkC is a substrate in vitro of the cotranscribed phosphatase PrpC, which suggests that they form a functional couple in vivo. Might also be involved in sporulation and biofilm formation. Does not seem to be involved in stress response. In Bacillus subtilis (strain 168), this protein is Serine/threonine-protein kinase PrkC (prkC).